Reading from the N-terminus, the 105-residue chain is MAEVTYKGKSFEVDEDGFLLRFDDWCPEWVEYVKESEGISDISPDHQKIIDFLQDYYKKNGIAPMVRILSKNTGFKLKEVYELFPSGPGKGACKMAGLPKPTGCV.

The protein belongs to the DsrC/TusE family. Heterohexamer of two alpha, two beta and two gamma subunits.

Its subcellular location is the cytoplasm. The enzyme catalyses [DsrC protein]-trisulfide + NAD(+) + 3 H2O = [DsrC protein]-dithiol + sulfite + NADH + 3 H(+). Its function is as follows. Catalyzes the reduction of sulfite to sulfide. This is the terminal oxidation reaction in sulfate respiration, a process catalyzed by the sulfate-reducing bacteria. The sequence is that of Sulfite reductase, dissimilatory-type subunit gamma (dsvC) from Nitratidesulfovibrio vulgaris (strain ATCC 29579 / DSM 644 / CCUG 34227 / NCIMB 8303 / VKM B-1760 / Hildenborough) (Desulfovibrio vulgaris).